Consider the following 141-residue polypeptide: Hemoglobin subunit alpha (141 aa).

Residues 1–141 (VLSPADKTNI…VSTVLVSKYR (141 aa)) form the Globin domain. Serine 3 carries the phosphoserine modification. Lysine 7 bears the N6-succinyllysine mark. A Phosphothreonine modification is found at threonine 8. Position 11 is an N6-succinyllysine (lysine 11). Lysine 16 bears the N6-acetyllysine; alternate mark. Lysine 16 carries the post-translational modification N6-succinyllysine; alternate. A Phosphotyrosine modification is found at tyrosine 24. Serine 35 carries the phosphoserine modification. An N6-succinyllysine modification is found at lysine 40. Residue serine 49 is modified to Phosphoserine. Histidine 58 is an O2 binding site. Heme b is bound at residue histidine 87. Residue serine 102 is modified to Phosphoserine. At threonine 108 the chain carries Phosphothreonine. Residues serine 124 and serine 131 each carry the phosphoserine modification. Position 134 is a phosphothreonine (threonine 134). The residue at position 138 (serine 138) is a Phosphoserine.

It belongs to the globin family. Heterotetramer of two alpha chains and two beta chains. As to expression, red blood cells.

Its function is as follows. Involved in oxygen transport from the lung to the various peripheral tissues. Hemopressin acts as an antagonist peptide of the cannabinoid receptor CNR1. Hemopressin-binding efficiently blocks cannabinoid receptor CNR1 and subsequent signaling. The sequence is that of Hemoglobin subunit alpha (HBA) from Myotis velifer (Mouse-eared bat).